The chain runs to 298 residues: Probable oxidoreductase (298 aa).

9-33 serves as a coordination point for NAD(+); sequence VVTGGASGLGAETVRALAAAGAEVT. Ser139 contacts substrate. Residue Tyr165 is the Proton acceptor of the active site.

The protein belongs to the short-chain dehydrogenases/reductases (SDR) family.

The polypeptide is Probable oxidoreductase (Streptomyces antibioticus).